Here is a 101-residue protein sequence, read N- to C-terminus: Thiosulfate sulfurtransferase GlpE (101 aa).

One can recognise a Rhodanese domain in the interval 17–101 (EAKSVQIVDI…GFSAWHEANA (85 aa)). Catalysis depends on Cys65, which acts as the Cysteine persulfide intermediate.

It belongs to the GlpE family.

It is found in the cytoplasm. It catalyses the reaction thiosulfate + hydrogen cyanide = thiocyanate + sulfite + 2 H(+). The catalysed reaction is thiosulfate + [thioredoxin]-dithiol = [thioredoxin]-disulfide + hydrogen sulfide + sulfite + 2 H(+). Functionally, transferase that catalyzes the transfer of sulfur from thiosulfate to thiophilic acceptors such as cyanide or dithiols. May function in a CysM-independent thiosulfate assimilation pathway by catalyzing the conversion of thiosulfate to sulfite, which can then be used for L-cysteine biosynthesis. This is Thiosulfate sulfurtransferase GlpE from Shewanella oneidensis (strain ATCC 700550 / JCM 31522 / CIP 106686 / LMG 19005 / NCIMB 14063 / MR-1).